The sequence spans 505 residues: Maturase K (505 aa).

This sequence belongs to the intron maturase 2 family. MatK subfamily.

It localises to the plastid. The protein resides in the chloroplast. Its function is as follows. Usually encoded in the trnK tRNA gene intron. Probably assists in splicing its own and other chloroplast group II introns. The polypeptide is Maturase K (Physcomitrium patens (Spreading-leaved earth moss)).